The sequence spans 66 residues: Protein translocase subunit SecE (66 aa).

A helical membrane pass occupies residues 29–49 (LIASTLVVVAAVFIFSLICLV).

It belongs to the SecE/SEC61-gamma family. Component of the Sec protein translocase complex. Heterotrimer consisting of SecY, SecE and SecG subunits. The heterotrimers can form oligomers, although 1 heterotrimer is thought to be able to translocate proteins. Interacts with the ribosome. Interacts with SecDF, and other proteins may be involved. Interacts with SecA.

Its subcellular location is the cell inner membrane. Functionally, essential subunit of the Sec protein translocation channel SecYEG. Clamps together the 2 halves of SecY. May contact the channel plug during translocation. This Rickettsia typhi (strain ATCC VR-144 / Wilmington) protein is Protein translocase subunit SecE.